The chain runs to 2100 residues: Autophagy-related protein 2 (2100 aa).

Disordered regions lie at residues 101 to 129, 288 to 363, 410 to 492, 512 to 588, 674 to 694, 1474 to 1499, and 1969 to 1996; these read LPDK…HSVL, STVH…DSDD, IFPK…AVSQ, MSAM…HNSP, LPIS…GLND, PSHG…SASA, and DFLN…VDEG. Positions 300 to 320 are enriched in low complexity; the sequence is RPRSPQPSSSGSDSCGDMSRS. Over residues 335-346 the composition is skewed to basic and acidic residues; the sequence is VDSHGDESRHLE. The segment covering 462 to 485 has biased composition (polar residues); that stretch reads DSATSARGKTPDCQTEQESPSTSK. A compositionally biased stretch (low complexity) spans 512 to 522; the sequence is MSAMSQSSTTS. Composition is skewed to basic and acidic residues over residues 535-546 and 555-565; these read KRIDTSDPDQKE and TEAKGASHDFD. The span at 1973 to 1985 shows a compositional bias: low complexity; it reads SPRGSPSRPSTSD. Over residues 1986–1996 the composition is skewed to basic and acidic residues; that stretch reads GRWDDNGVDEG.

This sequence belongs to the ATG2 family.

The protein resides in the preautophagosomal structure membrane. The protein localises to the endoplasmic reticulum membrane. The catalysed reaction is a 1,2-diacyl-sn-glycero-3-phosphocholine(in) = a 1,2-diacyl-sn-glycero-3-phosphocholine(out). It catalyses the reaction a 1,2-diacyl-sn-glycero-3-phospho-L-serine(in) = a 1,2-diacyl-sn-glycero-3-phospho-L-serine(out). It carries out the reaction a 1,2-diacyl-sn-glycero-3-phosphoethanolamine(in) = a 1,2-diacyl-sn-glycero-3-phosphoethanolamine(out). In terms of biological role, lipid transfer protein required for autophagosome completion and peroxisome degradation. Tethers the edge of the isolation membrane (IM) to the endoplasmic reticulum (ER) and mediates direct lipid transfer from ER to IM for IM expansion. ATG2 binds to the ER exit site (ERES), which is the membrane source for autophagosome formation, using basic residues in its N-terminal region (NR) and to the expanding edge of the IM through its C-terminal region. The latter binding is assisted by an ATG18-PtdIns3P interaction. ATG2 then extracts phospholipids from the membrane source using its NR and transfers them to ATG9 to the IM through its predicted beta-sheet-rich structure for membrane expansion. The chain is Autophagy-related protein 2 (ATG2) from Coccidioides immitis (strain RS) (Valley fever fungus).